Reading from the N-terminus, the 144-residue chain is Transcription antitermination protein NusB (144 aa).

Belongs to the NusB family.

In terms of biological role, involved in transcription antitermination. Required for transcription of ribosomal RNA (rRNA) genes. Binds specifically to the boxA antiterminator sequence of the ribosomal RNA (rrn) operons. The polypeptide is Transcription antitermination protein NusB (Streptococcus thermophilus (strain CNRZ 1066)).